The primary structure comprises 187 residues: Large ribosomal subunit protein eL18y (187 aa).

Positions 151–187 (FGPAPGVPHSHSKPYVRAKGRKFEKARGKRKSRGFKV) are disordered. Basic residues-rich tracts occupy residues 160–170 (SHSKPYVRAKG) and 177–187 (RGKRKSRGFKV).

The protein belongs to the eukaryotic ribosomal protein eL18 family. Interacts with NIK1. Interacts directly with EXA1. Ubiquitous.

The protein resides in the cytoplasm. This is Large ribosomal subunit protein eL18y (RPL18B) from Arabidopsis thaliana (Mouse-ear cress).